Consider the following 296-residue polypeptide: Methylsterol monooxygenase 1 (296 aa).

Transmembrane regions (helical) follow at residues 55 to 75 and 100 to 120; these read LLVHEASYFLLCVPGFIFQFI and TLIFNHFFIQLPLICGTYYFT. Residues 145–274 form the Fatty acid hydroxylase domain; it reads CAVIEDAWHY…FTWWDRIFGT (130 aa). Positions 157–161 match the Histidine box-1 motif; that stretch reads HRLLH. Positions 170–174 match the Histidine box-2 motif; that stretch reads HKVHH. A helical membrane pass occupies residues 199–219; that stretch reads FFIGIVVFCNHVVLLWAWVIC. Positions 249–255 match the Histidine box-3 motif; that stretch reads FHDFHHM.

The protein belongs to the sterol desaturase family. Fe cation serves as cofactor.

It localises to the endoplasmic reticulum membrane. It carries out the reaction 4,4-dimethyl-5alpha-cholest-7-en-3beta-ol + 6 Fe(II)-[cytochrome b5] + 3 O2 + 5 H(+) = 4alpha-carboxy-4beta-methyl-5alpha-cholest-7-ene-3beta-ol + 6 Fe(III)-[cytochrome b5] + 4 H2O. It participates in steroid biosynthesis; zymosterol biosynthesis; zymosterol from lanosterol: step 3/6. Functionally, catalyzes the first step in the removal of the two C-4 methyl groups of 4,4-dimethylzymosterol. This chain is Methylsterol monooxygenase 1 (MSMO1), found in Gallus gallus (Chicken).